Reading from the N-terminus, the 155-residue chain is NADPH-dependent 7-cyano-7-deazaguanine reductase (155 aa).

Catalysis depends on Cys-53, which acts as the Thioimide intermediate. Residue Asp-60 is the Proton donor of the active site. Residues 75–77 (VES) and 94–95 (HE) each bind substrate.

This sequence belongs to the GTP cyclohydrolase I family. QueF type 1 subfamily.

The protein resides in the cytoplasm. The catalysed reaction is 7-aminomethyl-7-carbaguanine + 2 NADP(+) = 7-cyano-7-deazaguanine + 2 NADPH + 3 H(+). Its pathway is tRNA modification; tRNA-queuosine biosynthesis. Functionally, catalyzes the NADPH-dependent reduction of 7-cyano-7-deazaguanine (preQ0) to 7-aminomethyl-7-deazaguanine (preQ1). The sequence is that of NADPH-dependent 7-cyano-7-deazaguanine reductase from Brucella suis (strain ATCC 23445 / NCTC 10510).